Consider the following 524-residue polypeptide: L-tyrosine:2-oxoglutarate aminotransferase atrD (524 aa).

Belongs to the class-I pyridoxal-phosphate-dependent aminotransferase family. Requires pyridoxal 5'-phosphate as cofactor.

The enzyme catalyses L-tyrosine + 2-oxoglutarate = 3-(4-hydroxyphenyl)pyruvate + L-glutamate. It functions in the pathway secondary metabolite biosynthesis. The L-tyrosine:2-oxoglutarate aminotransferase atrD and the atromentin synthetase atrA catalyze consecutive steps to turn over L-tyrosine into atromentin, which represents the generic precursor molecule for the entire terphenylquinone and pulvinic acid family of pigments, which are widely distributed secondary metabolites in homobasidiomycetes. The first step is catalyzed by atrD which converts L-tyrosine in to 4-hydroxyphenylpyruvate (4-HPP). Adenylation of two 4-HPP monomers by the atrA adenylation (A) domain, ester bond formation between monomers and atrA, and symmetric C-C-bond formation between two monomers by atrA leads to atromentin. This is L-tyrosine:2-oxoglutarate aminotransferase atrD from Tapinella panuoides (Oyster rollrim mushroom).